A 206-amino-acid polypeptide reads, in one-letter code: Small ribosomal subunit protein uS4 (206 aa).

The region spanning 96 to 158 is the S4 RNA-binding domain; it reads SRLDNVVYRM…AKKQSRIKAA (63 aa).

This sequence belongs to the universal ribosomal protein uS4 family. Part of the 30S ribosomal subunit. Contacts protein S5. The interaction surface between S4 and S5 is involved in control of translational fidelity.

Its function is as follows. One of the primary rRNA binding proteins, it binds directly to 16S rRNA where it nucleates assembly of the body of the 30S subunit. With S5 and S12 plays an important role in translational accuracy. The polypeptide is Small ribosomal subunit protein uS4 (Wigglesworthia glossinidia brevipalpis).